The chain runs to 225 residues: U2 small nuclear ribonucleoprotein B'' (225 aa).

An RRM 1 domain is found at 7–86; that stretch reads HTIYINNMND…KPMRIQYAKT (80 aa). Residues 100–144 are disordered; the sequence is DKEKKKEKKKAKTMEQAAAAANKKPGQGTPNAANTQGTAAPNPQV. The residue at position 111 (Lys111) is an N6-acetyllysine; alternate. Lys111 is covalently cross-linked (Glycyl lysine isopeptide (Lys-Gly) (interchain with G-Cter in SUMO2); alternate). The span at 113-123 shows a compositional bias: low complexity; it reads MEQAAAAANKK. Residues 127–140 are compositionally biased toward polar residues; that stretch reads GTPNAANTQGTAAP. Tyr151 is modified (phosphotyrosine). An RRM 2 domain is found at 151–225; that stretch reads YILFLNNLPE…HAMKITYAKK (75 aa).

Belongs to the RRM U1 A/B'' family. In terms of assembly, identified in the spliceosome B complex. Identified in the spliceosome C complex. Present in a spliceosome complex assembled in vitro, and composed of SNRPB2, HPRP8BP and CRNKL1. Contributes to the binding of stem loop IV of U2 snRNA with SNRPP1.

Its subcellular location is the nucleus. Functionally, involved in pre-mRNA splicing as component of the spliceosome. Associated with sn-RNP U2, where it contributes to the binding of stem loop IV of U2 snRNA. The chain is U2 small nuclear ribonucleoprotein B'' (Snrpb2) from Mus musculus (Mouse).